The primary structure comprises 177 residues: MNDSPVLVVGLGNPGPKYVGTRHNIGFEVVEELVGRNYANFSVHKRSNTEIAQLPGLIVAKPRSFMNLSGTPIRALCDFFKISPANVLVVHDELDLDFGQVKLRQGGGDHGHNGLKSTSRSLGTKDYWKLSVGIGRPPGRMDPATFVLKPFSKQEQDSVPIMAADAADLIEEHIRTL.

TRNA is bound at residue Y18. Catalysis depends on H23, which acts as the Proton acceptor. The tRNA site is built by F65, N67, and N113.

The protein belongs to the PTH family. Monomer.

It localises to the cytoplasm. It catalyses the reaction an N-acyl-L-alpha-aminoacyl-tRNA + H2O = an N-acyl-L-amino acid + a tRNA + H(+). Functionally, hydrolyzes ribosome-free peptidyl-tRNAs (with 1 or more amino acids incorporated), which drop off the ribosome during protein synthesis, or as a result of ribosome stalling. Catalyzes the release of premature peptidyl moieties from peptidyl-tRNA molecules trapped in stalled 50S ribosomal subunits, and thus maintains levels of free tRNAs and 50S ribosomes. The chain is Peptidyl-tRNA hydrolase from Corynebacterium efficiens (strain DSM 44549 / YS-314 / AJ 12310 / JCM 11189 / NBRC 100395).